A 53-amino-acid chain; its full sequence is UPF0391 membrane protein ECA0470 (53 aa).

Transmembrane regions (helical) follow at residues 4–24 (WGIIFLVIALIAAALGFGGLA) and 30–47 (AAKIVFVVGIILFLVSLF).

This sequence belongs to the UPF0391 family.

It localises to the cell membrane. The polypeptide is UPF0391 membrane protein ECA0470 (Pectobacterium atrosepticum (strain SCRI 1043 / ATCC BAA-672) (Erwinia carotovora subsp. atroseptica)).